The sequence spans 431 residues: L-cysteine:1D-myo-inositol 2-amino-2-deoxy-alpha-D-glucopyranoside ligase (431 aa).

Cys-44 is a binding site for Zn(2+). Residues 44–47 (CGIT), Thr-59, and 82–84 (NVT) each bind L-cysteinyl-5'-AMP. The short motif at 46 to 56 (ITPYDATHLGH) is the 'HIGH' region element. A 'ERGGDP' region motif is present at residues 187–192 (ERGGDP). Trp-227 contacts L-cysteinyl-5'-AMP. Cys-231 is a binding site for Zn(2+). Position 249–251 (249–251 (GND)) interacts with L-cysteinyl-5'-AMP. His-256 is a Zn(2+) binding site. Ile-283 is a binding site for L-cysteinyl-5'-AMP. The 'KMSKS' region signature appears at 289–293 (KMSKS).

Belongs to the class-I aminoacyl-tRNA synthetase family. MshC subfamily. In terms of assembly, monomer. It depends on Zn(2+) as a cofactor.

It catalyses the reaction 1D-myo-inositol 2-amino-2-deoxy-alpha-D-glucopyranoside + L-cysteine + ATP = 1D-myo-inositol 2-(L-cysteinylamino)-2-deoxy-alpha-D-glucopyranoside + AMP + diphosphate + H(+). Catalyzes the ATP-dependent condensation of GlcN-Ins and L-cysteine to form L-Cys-GlcN-Ins. In Stackebrandtia nassauensis (strain DSM 44728 / CIP 108903 / NRRL B-16338 / NBRC 102104 / LLR-40K-21), this protein is L-cysteine:1D-myo-inositol 2-amino-2-deoxy-alpha-D-glucopyranoside ligase.